The primary structure comprises 92 residues: uncharacterized protein (92 aa).

It belongs to the IUNH family.

This is an uncharacterized protein from Corynebacterium ammoniagenes (Brevibacterium ammoniagenes).